The primary structure comprises 122 residues: Small ribosomal subunit protein uS13 (122 aa).

Positions 95–122 are disordered; sequence GLPVRGQRTHTNARTRKGPRRGTVGKKK.

This sequence belongs to the universal ribosomal protein uS13 family. As to quaternary structure, part of the 30S ribosomal subunit. Forms a loose heterodimer with protein S19. Forms two bridges to the 50S subunit in the 70S ribosome.

In terms of biological role, located at the top of the head of the 30S subunit, it contacts several helices of the 16S rRNA. In the 70S ribosome it contacts the 23S rRNA (bridge B1a) and protein L5 of the 50S subunit (bridge B1b), connecting the 2 subunits; these bridges are implicated in subunit movement. Contacts the tRNAs in the A and P-sites. This is Small ribosomal subunit protein uS13 from Nitratidesulfovibrio vulgaris (strain ATCC 29579 / DSM 644 / CCUG 34227 / NCIMB 8303 / VKM B-1760 / Hildenborough) (Desulfovibrio vulgaris).